A 596-amino-acid chain; its full sequence is Transcription factor COE3 (596 aa).

Positions 1–22 are disordered; the sequence is MFGIQENIPRGGTTMKEEPLGS. The interval 63–66 is interaction with DNA; the sequence is RKSN. The segment at 151-170 adopts a C5-type zinc-finger fold; it reads CRVLLTHEIMCSRCCDKKSC. Interaction with DNA stretches follow at residues 197-204 and 236-239; these read NCLKNAGN and NNSK. One can recognise an IPT/TIG domain in the interval 263 to 346; it reads PCIKAISPSE…KGAPGRFVYT (84 aa). Residues 451–483 form a disordered region; sequence TSQANDQVGYSRNTSSVSPRGYVPSSTPQQSNY.

This sequence belongs to the COE family. Forms either a homodimer or a heterodimer with a related family member. Expressed in brain.

The protein resides in the nucleus. Transcriptional activator. Recognizes variations of the palindromic sequence 5'-ATTCCCNNGGGAATT-3'. The polypeptide is Transcription factor COE3 (EBF3) (Homo sapiens (Human)).